The sequence spans 322 residues: Olfactory receptor 1J1 (322 aa).

The Extracellular segment spans residues 1–25 (MSPENQSSVSEFLLLGLPIRPEQQA). Asn-5 carries an N-linked (GlcNAc...) asparagine glycan. The chain crosses the membrane as a helical span at residues 26–49 (VFFALFLGMYLTTVLGNLLIMLLI). The Cytoplasmic segment spans residues 50–57 (QLDSHLHT). Residues 58 to 79 (PMYFFLSHLALTDISFSSVTVP) traverse the membrane as a helical segment. The Extracellular segment spans residues 80–100 (KMLMNMQTQHLAVFYKGCISQ). Cysteines 97 and 189 form a disulfide. Residues 101–120 (TYFFIFFADLDSFLITSMAY) form a helical membrane-spanning segment. Residues 121 to 139 (DRYVAICHPLHYATIMTQS) lie on the Cytoplasmic side of the membrane. Residues 140 to 158 (QCVMLVAGSWVIACACALL) form a helical membrane-spanning segment. The Extracellular segment spans residues 159–196 (HTLLLAQLSFCADHIIPHYFCDLGALLKLSCSDTSLNQ). The chain crosses the membrane as a helical span at residues 197-219 (LAIFTAALTAIMLPFLCILVSYG). The Cytoplasmic portion of the chain corresponds to 220 to 236 (HIGVTILQIPSTKGICK). Residues 237 to 259 (ALSTCGSHLSVVTIYYRTIIGLY) form a helical membrane-spanning segment. Over 260–272 (FLPPSSNTNDKNI) the chain is Extracellular. A helical membrane pass occupies residues 273 to 292 (IASVIYTAVTPMLNPFIYSL). The Cytoplasmic portion of the chain corresponds to 293 to 322 (RNKDIKGALRKLLSRSGAVAHACNLNTLGG).

It belongs to the G-protein coupled receptor 1 family.

It localises to the cell membrane. Its function is as follows. Odorant receptor. The polypeptide is Olfactory receptor 1J1 (Homo sapiens (Human)).